The chain runs to 261 residues: Yop proteins translocation protein T (261 aa).

7 helical membrane-spanning segments follow: residues 20–40, 44–64, 77–97, 131–151, 180–200, 214–234, and 239–259; these read FMACFVILPVLSKQLLGGVLL, IVCSLALYVYPAVANQPYIEV, IILGLLIGFVATIPFWALESA, TLITIFFSGGAFLSLLSALFH, ILLIAAVLAAPLLIAMFLAEF, VFVLAMPIKSAIASLLLVIYC, and SHASKAMLLVMDPISLLIPVL.

This sequence belongs to the FliR/MopE/SpaR family.

The protein resides in the cell membrane. Its function is as follows. Component of the yop secretion machinery. This chain is Yop proteins translocation protein T (yscT), found in Yersinia pestis.